The chain runs to 461 residues: Asparagine--tRNA ligase (461 aa).

The protein belongs to the class-II aminoacyl-tRNA synthetase family. Homodimer.

It is found in the cytoplasm. The catalysed reaction is tRNA(Asn) + L-asparagine + ATP = L-asparaginyl-tRNA(Asn) + AMP + diphosphate + H(+). The protein is Asparagine--tRNA ligase of Geobacter sulfurreducens (strain ATCC 51573 / DSM 12127 / PCA).